The sequence spans 147 residues: Transcriptional regulator MraZ (147 aa).

SpoVT-AbrB domains are found at residues 6–48 and 77–120; these read NFER…NSEE and TVEV…SKAK.

This sequence belongs to the MraZ family. Forms oligomers.

The protein localises to the cytoplasm. Its subcellular location is the nucleoid. This chain is Transcriptional regulator MraZ, found in Mycoplasmopsis pulmonis (strain UAB CTIP) (Mycoplasma pulmonis).